Reading from the N-terminus, the 112-residue chain is uncharacterized protein (112 aa).

Fe cation-binding residues include C39, C105, and C107.

Belongs to the HesB/IscA family. Ycf83 subfamily.

Its subcellular location is the plastid. It is found in the chloroplast. This is an uncharacterized protein from Galdieria sulphuraria (Red alga).